The following is a 274-amino-acid chain: 2,3,4,5-tetrahydropyridine-2,6-dicarboxylate N-succinyltransferase (274 aa).

Residues R106 and D143 each contribute to the substrate site.

This sequence belongs to the transferase hexapeptide repeat family. Homotrimer.

Its subcellular location is the cytoplasm. The catalysed reaction is (S)-2,3,4,5-tetrahydrodipicolinate + succinyl-CoA + H2O = (S)-2-succinylamino-6-oxoheptanedioate + CoA. The protein operates within amino-acid biosynthesis; L-lysine biosynthesis via DAP pathway; LL-2,6-diaminopimelate from (S)-tetrahydrodipicolinate (succinylase route): step 1/3. The polypeptide is 2,3,4,5-tetrahydropyridine-2,6-dicarboxylate N-succinyltransferase (Herminiimonas arsenicoxydans).